The primary structure comprises 235 residues: Proteasome subunit alpha type-2-A (235 aa).

Residue lysine 64 forms a Glycyl lysine isopeptide (Lys-Gly) (interchain with G-Cter in ubiquitin) linkage.

This sequence belongs to the peptidase T1A family. Component of the 20S core complex of the 26S proteasome. The 26S proteasome is composed of a core protease (CP), known as the 20S proteasome, capped at one or both ends by the 19S regulatory particle (RP/PA700). The 20S proteasome core is composed of 28 subunits that are arranged in four stacked rings, resulting in a barrel-shaped structure. The two end rings are each formed by seven alpha subunits, and the two central rings are each formed by seven beta subunits. The catalytic chamber with the active sites is on the inside of the barrel.

It is found in the cytoplasm. The protein localises to the nucleus. In terms of biological role, the proteasome is a multicatalytic proteinase complex which is characterized by its ability to cleave peptides with Arg, Phe, Tyr, Leu, and Glu adjacent to the leaving group at neutral or slightly basic pH. The proteasome has an ATP-dependent proteolytic activity. In Arabidopsis thaliana (Mouse-ear cress), this protein is Proteasome subunit alpha type-2-A (PAB1).